The sequence spans 223 residues: N-acetylmuramate alpha-1-phosphate uridylyltransferase (223 aa).

Residues 11 to 13 (GER) and K23 each bind UTP. N105 serves as a coordination point for substrate. D107 is a Mg(2+) binding site. D140 and D205 together coordinate substrate. D205 serves as a coordination point for Mg(2+).

Belongs to the nucleotidyltransferase MurU family. As to quaternary structure, monomer. Mg(2+) is required as a cofactor.

The enzyme catalyses N-acetyl-alpha-D-muramate 1-phosphate + UDP + H(+) = UDP-N-acetyl-alpha-D-muramate + phosphate. Its pathway is cell wall biogenesis; peptidoglycan recycling. Its activity is regulated as follows. Is completely inhibited by EDTA in vitro. Its function is as follows. Catalyzes the formation of UDP-N-acetylmuramate (UDP-MurNAc), a crucial precursor of the bacterial peptidoglycan cell wall, from UTP and MurNAc-alpha-1P. Is involved in peptidoglycan recycling as part of a cell wall recycling pathway that bypasses de novo biosynthesis of the peptidoglycan precursor UDP-MurNAc. Plays a role in intrinsic resistance to fosfomycin, which targets the de novo synthesis of UDP-MurNAc. Is not able to use GlcNAc-alpha-1P and GalNAc-alpha-1P as substrates. Cannot accept other nucleotide triphosphates (ATP, CTP, TTP, or GTP) than UTP. This chain is N-acetylmuramate alpha-1-phosphate uridylyltransferase, found in Pseudomonas putida (strain ATCC 47054 / DSM 6125 / CFBP 8728 / NCIMB 11950 / KT2440).